The following is a 147-amino-acid chain: Transcriptional regulator MraZ (147 aa).

2 SpoVT-AbrB domains span residues 5–52 and 81–124; these read NHPT…PMEE and GQVV…NAEH.

Belongs to the MraZ family. In terms of assembly, forms oligomers.

The protein resides in the cytoplasm. It is found in the nucleoid. This is Transcriptional regulator MraZ from Koribacter versatilis (strain Ellin345).